The chain runs to 221 residues: MKQERYSVLSLNLGKPQTLEYDGKKIETGIMKRPAKSAVMLYRENFEGDGQADLVNHGGPDKAVCVYPAEHYPFWEEFLSRPLSNAAFGENLTVAGLTEENVCIGDVFRLDEAVVQVSQPRQPCVKLAKKFGVKEMVLKVQQTGYTGFYFRVLEEGRVSPGANLELLSRGEKGISVQFANRINYHDAKNLTAIERILSEAALSESWRASFMKKKDRLLPVE.

The MOSC domain maps to 33–167; sequence RPAKSAVMLY…VSPGANLELL (135 aa).

This is an uncharacterized protein from Bacillus subtilis (strain 168).